Consider the following 61-residue polypeptide: Translational regulator CsrA (61 aa).

It belongs to the CsrA/RsmA family. In terms of assembly, homodimer; the beta-strands of each monomer intercalate to form a hydrophobic core, while the alpha-helices form wings that extend away from the core.

The protein localises to the cytoplasm. In terms of biological role, a key translational regulator that binds mRNA to regulate translation initiation and/or mRNA stability. Mediates global changes in gene expression, shifting from rapid growth to stress survival by linking envelope stress, the stringent response and the catabolite repression systems. Usually binds in the 5'-UTR; binding at or near the Shine-Dalgarno sequence prevents ribosome-binding, repressing translation, binding elsewhere in the 5'-UTR can activate translation and/or stabilize the mRNA. Its function is antagonized by small RNA(s). In Glaesserella parasuis serovar 5 (strain SH0165) (Haemophilus parasuis), this protein is Translational regulator CsrA.